The primary structure comprises 331 residues: L-lactate dehydrogenase A chain (331 aa).

Residues 29 to 57 (GMVGMASAVSILLKDLCDELAMVDVMEDK) and Arg-98 contribute to the NAD(+) site. Arg-105, Asn-137, and Arg-168 together coordinate substrate. NAD(+) is bound at residue Asn-137. Catalysis depends on His-192, which acts as the Proton acceptor. Thr-247 serves as a coordination point for substrate.

It belongs to the LDH/MDH superfamily. LDH family. As to quaternary structure, homotetramer.

It localises to the cytoplasm. It catalyses the reaction (S)-lactate + NAD(+) = pyruvate + NADH + H(+). Its pathway is fermentation; pyruvate fermentation to lactate; (S)-lactate from pyruvate: step 1/1. Interconverts simultaneously and stereospecifically pyruvate and lactate with concomitant interconversion of NADH and NAD(+). In Notothenia neglecta (Yellowbelly rockcod), this protein is L-lactate dehydrogenase A chain (ldha).